We begin with the raw amino-acid sequence, 209 residues long: Uracil phosphoribosyltransferase (209 aa).

5-phospho-alpha-D-ribose 1-diphosphate-binding positions include Arg-79, Arg-104, and Asp-131–Ser-139. Residues Ile-194 and Gly-199–Ala-201 each bind uracil. Residue Asp-200 participates in 5-phospho-alpha-D-ribose 1-diphosphate binding.

This sequence belongs to the UPRTase family. Mg(2+) is required as a cofactor.

The enzyme catalyses UMP + diphosphate = 5-phospho-alpha-D-ribose 1-diphosphate + uracil. Its pathway is pyrimidine metabolism; UMP biosynthesis via salvage pathway; UMP from uracil: step 1/1. Allosterically activated by GTP. Functionally, catalyzes the conversion of uracil and 5-phospho-alpha-D-ribose 1-diphosphate (PRPP) to UMP and diphosphate. The protein is Uracil phosphoribosyltransferase of Lachnoclostridium phytofermentans (strain ATCC 700394 / DSM 18823 / ISDg) (Clostridium phytofermentans).